Consider the following 382-residue polypeptide: Dual-specificity RNA methyltransferase RlmN (382 aa).

The active-site Proton acceptor is the E91. A Radical SAM core domain is found at 97–339 (EEDRGTLCIS…TTIRKTRGDD (243 aa)). C104 and C344 are disulfide-bonded. [4Fe-4S] cluster-binding residues include C111, C115, and C118. Residues 165 to 166 (GE), S197, 219 to 221 (SLH), and N301 each bind S-adenosyl-L-methionine. Catalysis depends on C344, which acts as the S-methylcysteine intermediate.

Belongs to the radical SAM superfamily. RlmN family. Requires [4Fe-4S] cluster as cofactor.

Its subcellular location is the cytoplasm. The enzyme catalyses adenosine(2503) in 23S rRNA + 2 reduced [2Fe-2S]-[ferredoxin] + 2 S-adenosyl-L-methionine = 2-methyladenosine(2503) in 23S rRNA + 5'-deoxyadenosine + L-methionine + 2 oxidized [2Fe-2S]-[ferredoxin] + S-adenosyl-L-homocysteine. The catalysed reaction is adenosine(37) in tRNA + 2 reduced [2Fe-2S]-[ferredoxin] + 2 S-adenosyl-L-methionine = 2-methyladenosine(37) in tRNA + 5'-deoxyadenosine + L-methionine + 2 oxidized [2Fe-2S]-[ferredoxin] + S-adenosyl-L-homocysteine. Functionally, specifically methylates position 2 of adenine 2503 in 23S rRNA and position 2 of adenine 37 in tRNAs. m2A2503 modification seems to play a crucial role in the proofreading step occurring at the peptidyl transferase center and thus would serve to optimize ribosomal fidelity. In Albidiferax ferrireducens (strain ATCC BAA-621 / DSM 15236 / T118) (Rhodoferax ferrireducens), this protein is Dual-specificity RNA methyltransferase RlmN.